We begin with the raw amino-acid sequence, 898 residues long: Transportin-1 (898 aa).

An N-acetylmethionine modification is found at M1. HEAT repeat units follow at residues 19 to 46 (GLQQ…QKLE), 51 to 89 (YPDF…AHFQ), 98 to 131 (FIKS…KGEL), 137 to 174 (LLPK…LDSD), 181 to 211 (NIMI…QFII), 224 to 251 (FIEN…VMLL), 263 to 290 (HNIV…FWLT), 306 to 397 (PKLI…LANV), 405 to 433 (HILP…GAIA), 445 to 472 (PELI…TLSR), 486 to 519 (LKPL…EEEA), 527 to 560 (LAYI…ADSV), 568 to 606 (EYIQ…TALQ), 614 to 665 (EPVY…GLGG), 676 to 707 (ILTL…KACF), 715 to 748 (ADFM…IQMG), 756 to 791 (PMVL…YVCP), 799 to 832 (QQFI…ISVN), 841 to 872 (IFFC…KNQV), and 875 to 895 (ENWR…LAAF). The Importin N-terminal domain maps to 41–109 (VQQKLEQLNQ…KSECLNNIGD (69 aa)). The interval 347-374 (FHRSRTVAQQHDEDGIEEEDDDDDEIDD) is disordered. Positions 360-374 (DGIEEEDDDDDEIDD) are enriched in acidic residues.

The protein belongs to the importin beta family. Importin beta-2 subfamily. In terms of assembly, identified in a complex that contains TNPO1, RAN and RANBP1. Binds HNRPA1, HNRPA2, HNRNPDL, RPS7, RPL5 and RAN. Interacts with H2A, H2B, H3 and H4 histones. Interacts with isoform 1 and isoform 5 of ADAR/ADAR1 (via DRBM 3 domain). Interacts with SNAI1 (via zinc fingers); the interaction mediates SNAI1 nuclear import. Interacts with SNAI2 (via zinc fingers). Interacts with RPL23A (via BIB domain) and SRP19; this interaction is involved in RPL23A and SRP19 import into the nucleus. Interacts (via HEAT repeats 8-12) with BAP1 (via non-classical PY-NLS); this interaction is direct, is involved in BAP1 nuclear import and disrupts BAP1 homodimerization. (Microbial infection) Binds to HIV-1 Rev.

It is found in the cytoplasm. The protein resides in the nucleus. In terms of biological role, functions in nuclear protein import as nuclear transport receptor. Serves as receptor for nuclear localization signals (NLS) in cargo substrates. May mediate docking of the importin/substrate complex to the nuclear pore complex (NPC) through binding to nucleoporin and the complex is subsequently translocated through the pore by an energy requiring, Ran-dependent mechanism. At the nucleoplasmic side of the NPC, Ran binds to the importin, the importin/substrate complex dissociates and importin is re-exported from the nucleus to the cytoplasm where GTP hydrolysis releases Ran. The directionality of nuclear import is thought to be conferred by an asymmetric distribution of the GTP- and GDP-bound forms of Ran between the cytoplasm and nucleus. Involved in nuclear import of M9-containing proteins. In vitro, binds directly to the M9 region of the heterogeneous nuclear ribonucleoproteins (hnRNP), A1 and A2 and mediates their nuclear import. Involved in hnRNP A1/A2 nuclear export. Mediates the nuclear import of ribosomal proteins RPL23A, RPS7 and RPL5. In vitro, mediates nuclear import of H2A, H2B, H3 and H4 histones. In vitro, mediates nuclear import of SRP19. Mediates nuclear import of ADAR/ADAR1 isoform 1 and isoform 5 in a RanGTP-dependent manner. Main mediator of PR-DUB complex component BAP1 nuclear import; acts redundantly with the karyopherins KPNA1 and KPNA2. Its function is as follows. (Microbial infection) In case of HIV-1 infection, binds and mediates the nuclear import of HIV-1 Rev. The chain is Transportin-1 (TNPO1) from Homo sapiens (Human).